The sequence spans 170 residues: MRLQGAIFVLLPHLGPILVWLFTRDHMSGWCEGPRMLSWCPFYKVLLLVQTAIYSVVGYASYLVWKDLGGGLGWPLALPLGLYAVQLTISWTVLVLFFTVHNPGLALLHLLLLYGLVVSTALIWHPINKLAALLLLPYLAWLTVTSALTYHLWRDSLCPVHQPQPTEKSD.

5 helical membrane passes run 3–23 (LQGAIFVLLPHLGPILVWLFT), 45–65 (VLLLVQTAIYSVVGYASYLVW), 78–98 (LPLGLYAVQLTISWTVLVLFF), 104–124 (GLALLHLLLLYGLVVSTALIW), and 130–150 (LAALLLLPYLAWLTVTSALTY).

The protein belongs to the TspO/BZRP family. Homotetramer. May also form homodimer. In terms of tissue distribution, expressed in erythrocytes (at protein level).

The protein resides in the endoplasmic reticulum membrane. It is found in the cell membrane. Functionally, cholesterol-binding protein involved in the redistribution of cholesterol from lipid droplets to the endoplasmic reticulum. Required to meet cholesterol demands during erythropoietic differentiation. May play a role in transport processes at the plasma membrane of erythrocytes, including regulating VDAC-mediated ATP export, and import of the heme precursors protoporphyrin IX and 5-aminolevulinic acid. The chain is Translocator protein 2 (TSPO2) from Homo sapiens (Human).